The primary structure comprises 504 residues: Probable chlorophyll(ide) b reductase NYC1, chloroplastic (504 aa).

Residues 1-33 (MAAAAVVHLSVHGRLRRSPELHARPYHRPSLLR) constitute a chloroplast transit peptide. Residues 41-63 (ADNGGEEASSSPPPPTTAEARRR) are disordered. The next 2 membrane-spanning stretches (helical) occupy residues 114 to 134 (YVIT…LSGG) and 141 to 161 (LIWY…ANSV). 175–199 (ITGSTRGLGKALAREFLLSGDRVVI) serves as a coordination point for NAD(+). The Proton acceptor role is filled by tyrosine 339. A helical membrane pass occupies residues 479–499 (WVSVFSLSVVCAFIILSSSGG).

It belongs to the short-chain dehydrogenases/reductases (SDR) family. In terms of assembly, interacts with NOL to form a complex that acts as a chlorophyll b reductase. As to expression, expressed in leaves and stems. Also detected in non-photosynthetic tissues such as roots.

It is found in the plastid. The protein localises to the chloroplast thylakoid membrane. The catalysed reaction is 7(1)-hydroxychlorophyllide a + NAD(+) = chlorophyllide b + NADH + H(+). It catalyses the reaction 7(1)-hydroxychlorophyllide a + NADP(+) = chlorophyllide b + NADPH + H(+). Required for proper chloroplast degradation. Involved in chlorophyll b degradation. The polypeptide is Probable chlorophyll(ide) b reductase NYC1, chloroplastic (NYC1) (Oryza sativa subsp. japonica (Rice)).